The chain runs to 1938 residues: Myosin-1 (1938 aa).

The region spanning 33-82 (DAKTSVFVADPKESFVKATVQSREGGKVTAKTEAGATVTVKEDQVFPMNP) is the Myosin N-terminal SH3-like domain. Residues Thr64 and Thr69 each carry the phosphothreonine modification. Residues 86-781 (DKIEDMAMMT…LLGLLEEMRD (696 aa)) form the Myosin motor domain. Position 130 is an N6,N6,N6-trimethyllysine (Lys130). Position 179-186 (179-186 (GESGAGKT)) interacts with ATP. Tyr389 bears the Phosphotyrosine mark. Phosphothreonine is present on Thr419. Phosphotyrosine is present on Tyr424. Ser625 carries the post-translational modification Phosphoserine. Residues 658 to 680 (LNKLMTNLRSTHPHFVRCIIPNE) form an actin-binding region. A Pros-methylhistidine modification is found at His756. The actin-binding stretch occupies residues 760-774 (KFGHTKVFFKAGLLG). One can recognise an IQ domain in the interval 784–813 (LAQLITRTQARCRGFLARVEYQKMVERRES). Residues 842-1938 (LLKSAETEKE…EVHTKIISEE (1097 aa)) are a coiled coil. Residues Ser1091 and Ser1095 each carry the phosphoserine modification. Disordered regions lie at residues 1124–1146 (EIEA…SREL) and 1152–1171 (RLEE…KKRE). The span at 1127–1146 (AERASRAKAEKQRSDLSREL) shows a compositional bias: basic and acidic residues. Phosphoserine is present on residues Ser1161 and Ser1236. The residue at position 1240 (Thr1240) is a Phosphothreonine. Residues Ser1242 and Ser1260 each carry the phosphoserine modification. 2 positions are modified to phosphothreonine: Thr1264 and Thr1285. Residues Ser1287, Ser1291, Ser1302, and Ser1305 each carry the phosphoserine modification. Tyr1463 is modified (phosphotyrosine). Thr1466 is modified (phosphothreonine). Ser1473 is modified (phosphoserine). Tyr1491 is modified (phosphotyrosine). Ser1494 bears the Phosphoserine mark. Position 1500 is a phosphothreonine (Thr1500). Ser1513 bears the Phosphoserine mark. A Phosphothreonine modification is found at Thr1516. 7 positions are modified to phosphoserine: Ser1541, Ser1553, Ser1573, Ser1599, Ser1602, Ser1713, and Ser1725. Phosphothreonine occurs at positions 1729 and 1735.

It belongs to the TRAFAC class myosin-kinesin ATPase superfamily. Myosin family. Muscle myosin is a hexameric protein that consists of 2 heavy chain subunits (MHC), 2 alkali light chain subunits (MLC) and 2 regulatory light chain subunits (MLC-2). Interacts with SLC26A5.

It is found in the cytoplasm. The protein localises to the myofibril. Functionally, required for normal hearing. It plays a role in cochlear amplification of auditory stimuli, likely through the positive regulation of prestin (SLC26A5) activity and outer hair cell (OHC) electromotility. The polypeptide is Myosin-1 (MYH1) (Bos taurus (Bovine)).